Here is a 668-residue protein sequence, read N- to C-terminus: Threonine--tRNA ligase (668 aa).

Residues 1–64 (MSQSVSLTFP…TDGKIEIITR (64 aa)) form the TGS domain. The tract at residues 245–553 (DHRKLGREMD…LIENFAGHMP (309 aa)) is catalytic. Residues C347, H398, and H530 each contribute to the Zn(2+) site.

Belongs to the class-II aminoacyl-tRNA synthetase family. In terms of assembly, homodimer. Zn(2+) is required as a cofactor.

The protein resides in the cytoplasm. It catalyses the reaction tRNA(Thr) + L-threonine + ATP = L-threonyl-tRNA(Thr) + AMP + diphosphate + H(+). Functionally, catalyzes the attachment of threonine to tRNA(Thr) in a two-step reaction: L-threonine is first activated by ATP to form Thr-AMP and then transferred to the acceptor end of tRNA(Thr). Also edits incorrectly charged L-seryl-tRNA(Thr). The protein is Threonine--tRNA ligase of Rhizobium etli (strain ATCC 51251 / DSM 11541 / JCM 21823 / NBRC 15573 / CFN 42).